Here is a 111-residue protein sequence, read N- to C-terminus: Translation initiation factor 1A (111 aa).

The S1-like domain occupies 12 to 86 (GEMPLPSEDE…KKGEVVYRYL (75 aa)).

It belongs to the eIF-1A family.

Functionally, seems to be required for maximal rate of protein biosynthesis. Enhances ribosome dissociation into subunits and stabilizes the binding of the initiator Met-tRNA(I) to 40 S ribosomal subunits. This chain is Translation initiation factor 1A (eIF1A), found in Aeropyrum pernix (strain ATCC 700893 / DSM 11879 / JCM 9820 / NBRC 100138 / K1).